Consider the following 84-residue polypeptide: Putative membrane protein insertion efficiency factor (84 aa).

It belongs to the UPF0161 family.

The protein resides in the cell inner membrane. Could be involved in insertion of integral membrane proteins into the membrane. This chain is Putative membrane protein insertion efficiency factor, found in Shewanella sp. (strain ANA-3).